The sequence spans 245 residues: Fibroblast growth factor 13 (245 aa).

Residues 1–36 (MAAAIASSLIRQKRQAREREKSNACKCVSSPSKGKT) are disordered. Residues 1-62 (MAAAIASSLI…GSKKRRRRRP (62 aa)) are mediates targeting to the nucleus. The tract at residues 67 to 201 (KGIVTKLYSR…AHFLPKPLKV (135 aa)) is mediates interaction with sodium channels. A tubulin-binding domain necessary and sufficient for tubulin-binding region spans residues 157–164 (SMIYRQQQ). Phosphoserine is present on S208. The segment at 213–245 (TEFSRSGSGTPTKSRSVSGVLNGGKSMSHNEST) is disordered. Residues 215–245 (FSRSGSGTPTKSRSVSGVLNGGKSMSHNEST) are compositionally biased toward polar residues.

Belongs to the heparin-binding growth factors family. Interacts with SCN8A; regulates SCN8A activity. Interacts with SCN1A; may regulate SCN1A activity. Interacts with SCN5A; the interaction is direct and may regulate SNC5A density at membranes and function. May also interact with SCN2A and SCN11A. Interacts with MAPK8IP2; may regulate the MAPK8IP2 scaffolding activity. In terms of processing, may be phosphorylated. As to expression, detected in brain, eye and heart. In brain, the different isoforms display different patterns of expression. Expressed in brain and heart (at protein level). Isoform 3 is highly expressed in cardiac myocytes while isoform 1 is the most abundant in brain.

The protein localises to the cell projection. It is found in the filopodium. It localises to the growth cone. The protein resides in the dendrite. Its subcellular location is the cell membrane. The protein localises to the sarcolemma. It is found in the cytoplasm. It localises to the nucleus. In terms of biological role, microtubule-binding protein which directly binds tubulin and is involved in both polymerization and stabilization of microtubules. Through its action on microtubules, may participate to the refinement of axons by negatively regulating axonal and leading processes branching. Plays a crucial role in neuron polarization and migration in the cerebral cortex and the hippocampus. Regulates voltage-gated sodium channel transport and function. May also play a role in MAPK signaling. Required for the development of axonal initial segment-targeting inhibitory GABAergic synapses made by chandelier neurons. Seems not to be involved in neuroblast polarization and migration but regulates axon branching. This Mus musculus (Mouse) protein is Fibroblast growth factor 13.